Here is a 56-residue protein sequence, read N- to C-terminus: Single-pass membrane and coiled-coil domain-containing protein 4 homolog (56 aa).

The tract at residues 1 to 27 is disordered; the sequence is MRQLPGKAAKETRKMKRERKQQNKEGH. The stretch at 9–31 forms a coiled coil; that stretch reads AKETRKMKRERKQQNKEGHNRVV. Residues 30 to 50 traverse the membrane as a helical segment; it reads VVTVAIPVCLAVFVMLIVYVY.

Belongs to the SMCO4 family.

Its subcellular location is the membrane. The chain is Single-pass membrane and coiled-coil domain-containing protein 4 homolog from Nematostella vectensis (Starlet sea anemone).